The sequence spans 293 residues: MPWIQLRIDTDGPHADAISDQLMEEGSLSITFEDGKDSPIYEPTLGETPLWNHTVIIALFEANFDLSPVVERLKQLPCLGENFSYKIEQVEDKDWEREWMDNFHPIKFGDRLWICPSWREIPDPTAVNVILDPGLAFGTGTHPTTALCLEWLDGLDYSNKDVIDFGCGSGILAVAALKLGAERVTGIDIDYQAIEASKANAERNGVQDKLELYLPEDQPADLLADILVANILAGPLRELAPLIAEKVKPGGLLALSGLLQEQAEEVSAFYSQWFDMDEPAHKDDWSRLTGVRK.

Residues Thr-145, Gly-166, Asp-188, and Asn-230 each coordinate S-adenosyl-L-methionine.

It belongs to the methyltransferase superfamily. PrmA family.

The protein resides in the cytoplasm. It carries out the reaction L-lysyl-[protein] + 3 S-adenosyl-L-methionine = N(6),N(6),N(6)-trimethyl-L-lysyl-[protein] + 3 S-adenosyl-L-homocysteine + 3 H(+). Functionally, methylates ribosomal protein L11. This Shewanella halifaxensis (strain HAW-EB4) protein is Ribosomal protein L11 methyltransferase.